Consider the following 322-residue polypeptide: Probable F-box protein At1g60180 (322 aa).

The F-box domain maps to 45–88 (FCELSDECIAKILSGCPILESLTLSHCIYLTVLDLSKSLRLRTL).

In Arabidopsis thaliana (Mouse-ear cress), this protein is Probable F-box protein At1g60180.